The following is a 216-amino-acid chain: Proenkephalin-A-B (216 aa).

Propeptides lie at residues 64 to 85 (MDELYHAEPEEDDAGGEILAKN), 93 to 131 (EYDSNRDASDLLRELLATSGDPESAIYHDNNSETPGEMN), 144 to 155 (STDLEDETRGIQ), 165 to 175 (VGRPEWWQDYQ), and 183 to 207 (TRFTDSFLPSDEDGESYSKENPDME). Residues 114–133 (PESAIYHDNNSETPGEMNKR) form a disordered region.

The protein belongs to the opioid neuropeptide precursor family. Post-translationally, the N-terminal domain contains 6 conserved cysteines thought to be involved in disulfide bonding and/or processing.

Its subcellular location is the secreted. Functionally, enkephalin neuropeptides compete with and mimic the effects of opiate drugs. They play a role in a number of physiologic functions, including pain perception and responses to stress. This Xenopus laevis (African clawed frog) protein is Proenkephalin-A-B (penk-b).